The sequence spans 727 residues: Glycerol-3-phosphate dehydrogenase, mitochondrial (727 aa).

The N-terminal 42 residues, 1 to 42 (MAFQKAVKGTILVGGGALATVLGLSQFAHYRRKQMNLAYVKA), are a transit peptide targeting the mitochondrion. An FAD-binding site is contributed by 71–99 (DILVIGGGATGSGCALDAVTRGLKTALVE). Position 601 is a phosphotyrosine (Tyr-601). 2 EF-hand domains span residues 623–658 (SDID…INVQ) and 659–694 (MDEN…IQKG). Ca(2+) is bound by residues Asp-672, Asn-674, Asn-676, Gln-678, and Glu-683.

This sequence belongs to the FAD-dependent glycerol-3-phosphate dehydrogenase family. FAD serves as cofactor.

It localises to the mitochondrion. It catalyses the reaction a quinone + sn-glycerol 3-phosphate = dihydroxyacetone phosphate + a quinol. The protein operates within polyol metabolism; glycerol degradation via glycerol kinase pathway; glycerone phosphate from sn-glycerol 3-phosphate (anaerobic route): step 1/1. Its activity is regulated as follows. Calcium-binding enhance the activity of the enzyme. Its function is as follows. Calcium-responsive mitochondrial glycerol-3-phosphate dehydrogenase which seems to be a key component of the pancreatic beta-cell glucose-sensing device. The sequence is that of Glycerol-3-phosphate dehydrogenase, mitochondrial from Homo sapiens (Human).